Here is a 246-residue protein sequence, read N- to C-terminus: Glandular kallikrein (246 aa).

The propeptide occupies 1–7 (APPIQSR). The Peptidase S1 domain maps to 8 to 243 (IIGGRECEKN…YLDWINDTIT (236 aa)). Cystine bridges form between Cys-14–Cys-158, Cys-33–Cys-49, Cys-135–Cys-204, Cys-169–Cys-183, and Cys-194–Cys-219. The active-site Charge relay system is the His-48. N-linked (GlcNAc...) asparagine glycosylation occurs at Asn-85. Residues 85-104 (NLSLLKXHTKADGKDYSHDL) are kallikrein (autolysis) loop. The active-site Charge relay system is the Asp-103. Ser-198 serves as the catalytic Charge relay system. An N-linked (GlcNAc...) asparagine glycan is attached at Asn-239.

It belongs to the peptidase S1 family. Kallikrein subfamily. Monomer.

It carries out the reaction Preferential cleavage of Arg-|-Xaa bonds in small molecule substrates. Highly selective action to release kallidin (lysyl-bradykinin) from kininogen involves hydrolysis of Met-|-Xaa or Leu-|-Xaa.. Glandular kallikreins cleave Met-Lys and Arg-Ser bonds in kininogen to release Lys-bradykinin. The polypeptide is Glandular kallikrein (Sus scrofa (Pig)).